The chain runs to 990 residues: Bifunctional glutamine synthetase adenylyltransferase/adenylyl-removing enzyme (990 aa).

Residues 1–474 are adenylyl removase; it reads MPTDNENSMT…HFNELVEESQ (474 aa). The adenylyl transferase stretch occupies residues 484 to 990; it reads FIACQDAWRL…WDTLFGTCSE (507 aa).

It belongs to the GlnE family. The cofactor is Mg(2+).

It catalyses the reaction [glutamine synthetase]-O(4)-(5'-adenylyl)-L-tyrosine + phosphate = [glutamine synthetase]-L-tyrosine + ADP. It carries out the reaction [glutamine synthetase]-L-tyrosine + ATP = [glutamine synthetase]-O(4)-(5'-adenylyl)-L-tyrosine + diphosphate. Involved in the regulation of glutamine synthetase GlnA, a key enzyme in the process to assimilate ammonia. When cellular nitrogen levels are high, the C-terminal adenylyl transferase (AT) inactivates GlnA by covalent transfer of an adenylyl group from ATP to specific tyrosine residue of GlnA, thus reducing its activity. Conversely, when nitrogen levels are low, the N-terminal adenylyl removase (AR) activates GlnA by removing the adenylyl group by phosphorolysis, increasing its activity. The regulatory region of GlnE binds the signal transduction protein PII (GlnB) which indicates the nitrogen status of the cell. This chain is Bifunctional glutamine synthetase adenylyltransferase/adenylyl-removing enzyme, found in Alteromonas mediterranea (strain DSM 17117 / CIP 110805 / LMG 28347 / Deep ecotype).